Reading from the N-terminus, the 603-residue chain is Phosphoribosylformylglycinamidine synthase subunit PurL (603 aa).

H32 is an active-site residue. ATP-binding residues include Y35 and K68. E70 is a Mg(2+) binding site. Substrate contacts are provided by residues S71–H74 and R93. H72 (proton acceptor) is an active-site residue. Residue D94 participates in Mg(2+) binding. ATP contacts are provided by residues D107 and G136 to R139. Residues G189 and Q208 each coordinate substrate. Mg(2+) is bound at residue D236. E280–Q282 is a substrate binding site. 4 residues coordinate ATP: G388, K429, N442, and G477. N478 contributes to the Mg(2+) binding site. S480 is a binding site for substrate. Residues S549 and H556 each contribute to the ATP site.

This sequence belongs to the FGAMS family. In terms of assembly, monomer. Part of the FGAM synthase complex composed of 1 PurL, 1 PurQ and 2 PurS subunits.

The protein resides in the cytoplasm. The catalysed reaction is N(2)-formyl-N(1)-(5-phospho-beta-D-ribosyl)glycinamide + L-glutamine + ATP + H2O = 2-formamido-N(1)-(5-O-phospho-beta-D-ribosyl)acetamidine + L-glutamate + ADP + phosphate + H(+). The protein operates within purine metabolism; IMP biosynthesis via de novo pathway; 5-amino-1-(5-phospho-D-ribosyl)imidazole from N(2)-formyl-N(1)-(5-phospho-D-ribosyl)glycinamide: step 1/2. In terms of biological role, part of the phosphoribosylformylglycinamidine synthase complex involved in the purines biosynthetic pathway. Catalyzes the ATP-dependent conversion of formylglycinamide ribonucleotide (FGAR) and glutamine to yield formylglycinamidine ribonucleotide (FGAM) and glutamate. The FGAM synthase complex is composed of three subunits. PurQ produces an ammonia molecule by converting glutamine to glutamate. PurL transfers the ammonia molecule to FGAR to form FGAM in an ATP-dependent manner. PurS interacts with PurQ and PurL and is thought to assist in the transfer of the ammonia molecule from PurQ to PurL. This Thermotoga maritima (strain ATCC 43589 / DSM 3109 / JCM 10099 / NBRC 100826 / MSB8) protein is Phosphoribosylformylglycinamidine synthase subunit PurL.